The chain runs to 1123 residues: Inner tegument protein (1123 aa).

Disordered stretches follow at residues 1 to 27 and 1047 to 1123; these read MADRGLPSEAPVVTTSPAGPPSDGPMQ and RPLA…TSYQ. The interaction with large tegument protein stretch occupies residues 568–1123; it reads WDITPTTPAT…PTDLPLTSYQ (556 aa).

Belongs to the herpesviridae inner tegument protein family. In terms of assembly, interacts (via C-terminus) with the large tegument protein/LTP (via N-terminus). Interacts with host DST. Interacts with host RIGI; this interaction inhibits RIGI activation. Interacts with host CGAS; this interaction inhibits host CGAS activation. Interacts with host TAOK3.

The protein localises to the virion tegument. It is found in the host cytoplasm. The protein resides in the host nucleus. Its subcellular location is the host Golgi apparatus. It localises to the host trans-Golgi network. The catalysed reaction is L-asparaginyl-[protein] + H2O = L-aspartyl-[protein] + NH4(+). It catalyses the reaction L-glutaminyl-[protein] + H2O = L-glutamyl-[protein] + NH4(+). Functionally, plays an essential role in cytoplasmic secondary envelopment during viral egress. Interacts with the capsid via the large tegument protein/LTP and participates in its transport to the host trans-Golgi network (TGN) where secondary envelopment occurs. Modulates tegumentation and capsid accumulation at the viral assembly complex. Plays a role in microtubule-based retrograde axonal transport to promote neuroinvasion. Also plays a role in the inhibition of host immune response by acting as a viral deamidase. Deamidates host RIGI on two asparagines which becomes unable to sense viral dsRNA. In turn, its ability to trigger antiviral immune response and restrict viral replication is inhibited. Also deamidates a critical asparagine on host CGAS which abolishes cGAMP synthesis and downstream innate immune activation. In Homo sapiens (Human), this protein is Inner tegument protein (UL37).